A 356-amino-acid polypeptide reads, in one-letter code: Histidine biosynthesis bifunctional protein HisB (356 aa).

The interval 1–166 is histidinol-phosphatase; that stretch reads MSKKVLFIDR…AICNYLTSLN (166 aa). Aspartate 9 serves as the catalytic Nucleophile. Mg(2+) contacts are provided by aspartate 9 and aspartate 11. Aspartate 11 serves as the catalytic Proton donor. Zn(2+) contacts are provided by cysteine 93, histidine 95, cysteine 101, and cysteine 103. Residue aspartate 130 coordinates Mg(2+). Positions 167-356 are imidazoleglycerol-phosphate dehydratase; it reads RYAHVKRITK…VLPSSKGVLS (190 aa).

This sequence in the N-terminal section; belongs to the histidinol-phosphatase family. In the C-terminal section; belongs to the imidazoleglycerol-phosphate dehydratase family. It depends on Mg(2+) as a cofactor. Zn(2+) is required as a cofactor.

The protein resides in the cytoplasm. The enzyme catalyses D-erythro-1-(imidazol-4-yl)glycerol 3-phosphate = 3-(imidazol-4-yl)-2-oxopropyl phosphate + H2O. The catalysed reaction is L-histidinol phosphate + H2O = L-histidinol + phosphate. It functions in the pathway amino-acid biosynthesis; L-histidine biosynthesis; L-histidine from 5-phospho-alpha-D-ribose 1-diphosphate: step 6/9. It participates in amino-acid biosynthesis; L-histidine biosynthesis; L-histidine from 5-phospho-alpha-D-ribose 1-diphosphate: step 8/9. The protein is Histidine biosynthesis bifunctional protein HisB of Baumannia cicadellinicola subsp. Homalodisca coagulata.